A 482-amino-acid chain; its full sequence is Cysteine--tRNA ligase (482 aa).

C29 contacts Zn(2+). The 'HIGH' region motif lies at 31 to 41; sequence PTVYDSAHVGH. Zn(2+)-binding residues include C210, H235, and E239. Residues 272-276 carry the 'KMSKS' region motif; that stretch reads KMSKS. Residue K275 participates in ATP binding.

The protein belongs to the class-I aminoacyl-tRNA synthetase family. Monomer. The cofactor is Zn(2+).

It is found in the cytoplasm. The catalysed reaction is tRNA(Cys) + L-cysteine + ATP = L-cysteinyl-tRNA(Cys) + AMP + diphosphate. This is Cysteine--tRNA ligase from Anaeromyxobacter sp. (strain Fw109-5).